Here is a 314-residue protein sequence, read N- to C-terminus: tRNA dimethylallyltransferase (314 aa).

12 to 19 (GPTASGKT) provides a ligand contact to ATP. A substrate-binding site is contributed by 14–19 (TASGKT). Interaction with substrate tRNA regions lie at residues 37–40 (DSAL), 161–165 (QRIQR), and 244–249 (RCVGYR).

It belongs to the IPP transferase family. As to quaternary structure, monomer. Mg(2+) is required as a cofactor.

It catalyses the reaction adenosine(37) in tRNA + dimethylallyl diphosphate = N(6)-dimethylallyladenosine(37) in tRNA + diphosphate. Functionally, catalyzes the transfer of a dimethylallyl group onto the adenine at position 37 in tRNAs that read codons beginning with uridine, leading to the formation of N6-(dimethylallyl)adenosine (i(6)A). The protein is tRNA dimethylallyltransferase of Janthinobacterium sp. (strain Marseille) (Minibacterium massiliensis).